Here is a 129-residue protein sequence, read N- to C-terminus: Small ribosomal subunit protein uS11 (129 aa).

Belongs to the universal ribosomal protein uS11 family. In terms of assembly, part of the 30S ribosomal subunit. Interacts with proteins S7 and S18. Binds to IF-3.

Its function is as follows. Located on the platform of the 30S subunit, it bridges several disparate RNA helices of the 16S rRNA. Forms part of the Shine-Dalgarno cleft in the 70S ribosome. The polypeptide is Small ribosomal subunit protein uS11 (Parvibaculum lavamentivorans (strain DS-1 / DSM 13023 / NCIMB 13966)).